Reading from the N-terminus, the 451-residue chain is F-box only protein 47 (451 aa).

In terms of domain architecture, F-box spans 41–91; it reads LGNFKVLPLEILHIILRYLSVKDIGMLSMVSKTVSQHIINYISTSSGSRRL.

As to quaternary structure, part of a SCF (SKP1-cullin-F-box) protein ligase complex.

Probably recognizes and binds to some phosphorylated proteins and promotes their ubiquitination and degradation. This Mus musculus (Mouse) protein is F-box only protein 47 (Fbxo47).